The sequence spans 274 residues: Undecaprenyl-diphosphatase 2 (274 aa).

A run of 6 helical transmembrane segments spans residues 47 to 64 (VFVI…CWEY), 82 to 102 (WKFV…GLTF), 110 to 130 (LFSP…ILWA), 185 to 205 (ATEF…LYDL), 219 to 239 (LMAV…RGLI), and 249 to 269 (VFAW…WSGL).

It belongs to the UppP family.

The protein localises to the cell inner membrane. The catalysed reaction is di-trans,octa-cis-undecaprenyl diphosphate + H2O = di-trans,octa-cis-undecaprenyl phosphate + phosphate + H(+). In terms of biological role, catalyzes the dephosphorylation of undecaprenyl diphosphate (UPP). Confers resistance to bacitracin. The polypeptide is Undecaprenyl-diphosphatase 2 (Rhodospirillum rubrum (strain ATCC 11170 / ATH 1.1.1 / DSM 467 / LMG 4362 / NCIMB 8255 / S1)).